Here is a 267-residue protein sequence, read N- to C-terminus: Small ribosomal subunit protein uS3 (267 aa).

Residues 43-111 (IRKEMSKDLE…QVQLNIFEVK (69 aa)) enclose the KH type-2 domain. Positions 216-267 (FEEQQAQQNNRPGRRGGDRRPRRGNRSAAPQAAEAPKAEAPAEAAPAAETKE) are disordered. Positions 241 to 267 (RSAAPQAAEAPKAEAPAEAAPAAETKE) are enriched in low complexity.

This sequence belongs to the universal ribosomal protein uS3 family. Part of the 30S ribosomal subunit. Forms a tight complex with proteins S10 and S14.

Functionally, binds the lower part of the 30S subunit head. Binds mRNA in the 70S ribosome, positioning it for translation. This chain is Small ribosomal subunit protein uS3, found in Bifidobacterium longum subsp. infantis (strain ATCC 15697 / DSM 20088 / JCM 1222 / NCTC 11817 / S12).